Reading from the N-terminus, the 486-residue chain is Ribulose bisphosphate carboxylase large chain, chromosomal (486 aa).

Substrate-binding residues include asparagine 126 and threonine 176. The active-site Proton acceptor is the lysine 178. Lysine 180 is a binding site for substrate. 3 residues coordinate Mg(2+): lysine 204, aspartate 206, and glutamate 207. N6-carboxylysine is present on lysine 204. The Proton acceptor role is filled by histidine 296. Residues arginine 297, histidine 329, and serine 381 each contribute to the substrate site.

It belongs to the RuBisCO large chain family. Type I subfamily. Heterohexadecamer of 8 large chains and 8 small chains; disulfide-linked. The disulfide link is formed within the large subunit homodimers. Mg(2+) serves as cofactor. The disulfide bond which can form between Cys-278 in the large chain dimeric partners within the hexadecamer appears to be associated with oxidative stress and protein turnover.

It carries out the reaction 2 (2R)-3-phosphoglycerate + 2 H(+) = D-ribulose 1,5-bisphosphate + CO2 + H2O. The enzyme catalyses D-ribulose 1,5-bisphosphate + O2 = 2-phosphoglycolate + (2R)-3-phosphoglycerate + 2 H(+). RuBisCO catalyzes two reactions: the carboxylation of D-ribulose 1,5-bisphosphate, the primary event in carbon dioxide fixation, as well as the oxidative fragmentation of the pentose substrate. Both reactions occur simultaneously and in competition at the same active site. This is Ribulose bisphosphate carboxylase large chain, chromosomal (cbbL1) from Cupriavidus necator (strain ATCC 17699 / DSM 428 / KCTC 22496 / NCIMB 10442 / H16 / Stanier 337) (Ralstonia eutropha).